We begin with the raw amino-acid sequence, 389 residues long: Succinate--CoA ligase [ADP-forming] subunit beta (389 aa).

An ATP-grasp domain is found at 9–236; that stretch reads KELFAKHGVP…RDATDPLELK (228 aa). Residues K45, 52–54, S94, and E99 contribute to the ATP site; that span reads GRG. Residues N191 and D205 each contribute to the Mg(2+) site. Residues N256 and 318 to 320 each bind substrate; that span reads GIT.

The protein belongs to the succinate/malate CoA ligase beta subunit family. In terms of assembly, heterotetramer of two alpha and two beta subunits. Mg(2+) is required as a cofactor.

The enzyme catalyses succinate + ATP + CoA = succinyl-CoA + ADP + phosphate. The catalysed reaction is GTP + succinate + CoA = succinyl-CoA + GDP + phosphate. It participates in carbohydrate metabolism; tricarboxylic acid cycle; succinate from succinyl-CoA (ligase route): step 1/1. Functionally, succinyl-CoA synthetase functions in the citric acid cycle (TCA), coupling the hydrolysis of succinyl-CoA to the synthesis of either ATP or GTP and thus represents the only step of substrate-level phosphorylation in the TCA. The beta subunit provides nucleotide specificity of the enzyme and binds the substrate succinate, while the binding sites for coenzyme A and phosphate are found in the alpha subunit. This Rhodococcus erythropolis (strain PR4 / NBRC 100887) protein is Succinate--CoA ligase [ADP-forming] subunit beta.